Consider the following 53-residue polypeptide: MFRWGIIFLVIALIAAALGFGGLAGTAAGAAKIVFVVGIILFLVSLFMGRKRP.

The next 2 helical transmembrane spans lie at 4-24 and 30-48; these read WGII…GGLA and AAKI…SLFM.

The protein belongs to the UPF0391 family.

Its subcellular location is the cell membrane. The chain is UPF0391 membrane protein YtjA from Escherichia coli O6:K15:H31 (strain 536 / UPEC).